The chain runs to 268 residues: Movement protein (268 aa).

The tract at residues 216–238 is disordered; sequence KKSDVRKGKNSSSVRSVPNKNYR. A compositionally biased stretch (polar residues) spans 225–237; the sequence is NSSSVRSVPNKNY.

The protein belongs to the tobamovirus movement protein family. In terms of assembly, binds to host RBCS at the plasmodesmata; this interaction seems required for viral systemic movement. In resistant plants, interacts with host MBP2C at host microtubules; this interaction prevents virus cell to cell movement. In resistant plants, interacts with host resistance (R) protein (e.g. tomato ToMV resistance protein TM-2(2), AC Q71BG9) at the host plasma membrane; this interaction triggers host defense responses leading to programmed cell death.

It localises to the host cytoplasm. It is found in the host cytoskeleton. Its subcellular location is the host cell junction. The protein resides in the host plasmodesma. Functionally, transports viral genome to neighboring plant cells directly through plasmosdesmata, without any budding. The movement protein allows efficient cell to cell propagation, by bypassing the host cell wall barrier. Forms a ribonucleoprotein complex with viral RNA. Binds microtubules and modulates microtubule stability. Can bind double-stranded DNA. Triggers host hypersensitive defense reaction in incompatible plants harboring resistance (R) proteins. The protein is Movement protein (MP) of Nicotiana tabacum (Common tobacco).